The sequence spans 330 residues: Glycerol-3-phosphate dehydrogenase [NAD(P)+] (330 aa).

Positions 10, 11, 31, and 105 each coordinate NADPH. Sn-glycerol 3-phosphate contacts are provided by Lys105, Gly135, and Ser137. Ala139 contacts NADPH. Residues Lys190, Asp243, Ser253, Arg254, and Asn255 each coordinate sn-glycerol 3-phosphate. Lys190 acts as the Proton acceptor in catalysis. Arg254 provides a ligand contact to NADPH. NADPH-binding residues include Val278 and Glu280.

Belongs to the NAD-dependent glycerol-3-phosphate dehydrogenase family.

It is found in the cytoplasm. It carries out the reaction sn-glycerol 3-phosphate + NAD(+) = dihydroxyacetone phosphate + NADH + H(+). The catalysed reaction is sn-glycerol 3-phosphate + NADP(+) = dihydroxyacetone phosphate + NADPH + H(+). Its pathway is membrane lipid metabolism; glycerophospholipid metabolism. In terms of biological role, catalyzes the reduction of the glycolytic intermediate dihydroxyacetone phosphate (DHAP) to sn-glycerol 3-phosphate (G3P), the key precursor for phospholipid synthesis. The sequence is that of Glycerol-3-phosphate dehydrogenase [NAD(P)+] from Nitratidesulfovibrio vulgaris (strain ATCC 29579 / DSM 644 / CCUG 34227 / NCIMB 8303 / VKM B-1760 / Hildenborough) (Desulfovibrio vulgaris).